We begin with the raw amino-acid sequence, 335 residues long: Methionine import ATP-binding protein MetN (335 aa).

The 240-residue stretch at 2 to 241 (IQFQRLHKSY…PQHPTTRRFV (240 aa)) folds into the ABC transporter domain. 38–45 (GHSGAGKS) is a binding site for ATP.

It belongs to the ABC transporter superfamily. Methionine importer (TC 3.A.1.24) family. As to quaternary structure, the complex is composed of two ATP-binding proteins (MetN), two transmembrane proteins (MetI) and a solute-binding protein (MetQ).

The protein resides in the cell inner membrane. The catalysed reaction is L-methionine(out) + ATP + H2O = L-methionine(in) + ADP + phosphate + H(+). It catalyses the reaction D-methionine(out) + ATP + H2O = D-methionine(in) + ADP + phosphate + H(+). In terms of biological role, part of the ABC transporter complex MetNIQ involved in methionine import. Responsible for energy coupling to the transport system. The sequence is that of Methionine import ATP-binding protein MetN from Xanthomonas campestris pv. campestris (strain 8004).